The chain runs to 435 residues: Zinc finger CCCH domain-containing protein 67 (435 aa).

The interval 1-91 is disordered; it reads MSKPEETSDP…DQKEEEEGSE (91 aa). C3H1-type zinc fingers lie at residues 101–129, 148–176, and 194–222; these read RPDS…HPVR, NPKL…HMKE, and RPGE…HPDP. Residues 235–274 are disordered; the sequence is GNNGGSFSPKAPSQASSTSWSSTRHMNGTGTAPFIPSMFP. Residues 247–256 show a composition bias toward low complexity; it reads SQASSTSWSS. 2 C3H1-type zinc fingers span residues 334–362 and 380–408; these read RPDQ…HPKN and RPDQ…HSIP. The tract at residues 412-435 is disordered; that stretch reads SPSSSQTVEARQVGANGNEDDSWH.

Its subcellular location is the nucleus. The protein is Zinc finger CCCH domain-containing protein 67 of Arabidopsis thaliana (Mouse-ear cress).